A 545-amino-acid polypeptide reads, in one-letter code: Chaperonin GroEL 5 (545 aa).

ATP-binding positions include 30–33, Lys-51, 87–91, Gly-415, and Asp-495; these read TLGP and DGTTT.

This sequence belongs to the chaperonin (HSP60) family. As to quaternary structure, forms a cylinder of 14 subunits composed of two heptameric rings stacked back-to-back. Interacts with the co-chaperonin GroES.

The protein localises to the cytoplasm. It catalyses the reaction ATP + H2O + a folded polypeptide = ADP + phosphate + an unfolded polypeptide.. Together with its co-chaperonin GroES, plays an essential role in assisting protein folding. The GroEL-GroES system forms a nano-cage that allows encapsulation of the non-native substrate proteins and provides a physical environment optimized to promote and accelerate protein folding. This is Chaperonin GroEL 5 from Sinorhizobium medicae (strain WSM419) (Ensifer medicae).